Reading from the N-terminus, the 63-residue chain is Conotoxin TeAr193 (63 aa).

The first 22 residues, 1–22 (MRCLPVFVILLLLIASAPSVDA), serve as a signal peptide directing secretion. Residues 23–48 (QPKTKDDIPQASFLDNAKRYLQVLES) constitute a propeptide that is removed on maturation.

It belongs to the conotoxin T superfamily. Contains 2 disulfide bonds that can be either 'C1-C3, C2-C4' or 'C1-C4, C2-C3', since these disulfide connectivities have been observed for conotoxins with cysteine framework V (for examples, see AC P0DQQ7 and AC P81755). In terms of tissue distribution, expressed by the venom duct.

Its subcellular location is the secreted. The protein is Conotoxin TeAr193 of Conus textile (Cloth-of-gold cone).